The chain runs to 248 residues: 5'-nucleotidase SurE (248 aa).

4 residues coordinate a divalent metal cation: Asp-8, Asp-9, Ser-39, and Asn-91.

It belongs to the SurE nucleotidase family. The cofactor is a divalent metal cation.

The protein localises to the cytoplasm. It catalyses the reaction a ribonucleoside 5'-phosphate + H2O = a ribonucleoside + phosphate. In terms of biological role, nucleotidase that shows phosphatase activity on nucleoside 5'-monophosphates. This is 5'-nucleotidase SurE from Neisseria meningitidis serogroup B (strain ATCC BAA-335 / MC58).